A 348-amino-acid chain; its full sequence is Autophagy-related protein 27 (348 aa).

Residues 1–20 form the signal peptide; the sequence is MYRPDLLAFLLPLLAAPVFS. The Lumenal portion of the chain corresponds to 21–274; it reads AETLDCGKIR…DDGGDNSSSH (254 aa). An MRH domain is found at 24 to 255; it reads LDCGKIRADG…TWHTKYACEK (232 aa). 3 disulfides stabilise this stretch: Cys-26/Cys-69, Cys-82/Cys-89, and Cys-175/Cys-253. N-linked (GlcNAc...) asparagine glycosylation is found at Asn-61 and Asn-84. Positions 180–208 are enriched in basic and acidic residues; that stretch reads EGTEGEWVSEEKYEKRADEKKDDDKKEDG. Residues 180-219 form a disordered region; it reads EGTEGEWVSEEKYEKRADEKKDDDKKEDGGDKDEGESTLE. Residues Asn-226 and Asn-270 are each glycosylated (N-linked (GlcNAc...) asparagine). The chain crosses the membrane as a helical span at residues 275–295; it reads WGFFTWFVLIAFLLIAGYLIF. Topologically, residues 296 to 348 are cytoplasmic; that stretch reads SSWINFTRYGARGWDLLPHSDTIRDIPYLLKDFIRRILNTVQGTGSRGGYSAV.

Belongs to the ATG27 family. In terms of assembly, forms a complex with ATG9 and ATG23.

It is found in the cytoplasmic vesicle membrane. Its subcellular location is the golgi apparatus membrane. The protein resides in the mitochondrion membrane. It localises to the preautophagosomal structure membrane. Effector of VPS34 phosphatidylinositol 3-phosphate kinase signaling. Regulates the cytoplasm to vacuole transport (Cvt) vesicle formation. Plays a role in ATG protein retrieval from the pre-autophagosomal structure (PAS) and is especially required for autophagy-dependent cycling of ATG9. Autophagy is required for proper vegetative growth, asexual/sexual reproduction, and full virulence. Autophagy is particularly involved in the biosynthesis of deoxynivalenol (DON), an important virulence determinant. This chain is Autophagy-related protein 27, found in Gibberella zeae (strain ATCC MYA-4620 / CBS 123657 / FGSC 9075 / NRRL 31084 / PH-1) (Wheat head blight fungus).